The following is a 171-amino-acid chain: KRAB domain-containing protein 4 (171 aa).

The KRAB domain occupies 8–79 (LTFKDVFVDF…DGGTPVRTCA (72 aa)).

In terms of tissue distribution, expressed in brain, ovary, testis, prostate, tonsil, heart, bone marrow, colon, breast and kidney.

This chain is KRAB domain-containing protein 4 (KRBOX4), found in Homo sapiens (Human).